The following is a 1301-amino-acid chain: Tyrosine-protein phosphatase 99A (1301 aa).

The N-terminal stretch at 1–28 is a signal peptide; that stretch reads MPRPQHHALLRAMLKLLLFASIAEHCAT. Residues 29 to 394 are Extracellular-facing; sequence ALPTNSSNSP…RQSHNDYNLA (366 aa). The segment at 31–63 is disordered; the sequence is PTNSSNSPSSPSPFTVASLPPTTASSSSSPAVI. N-linked (GlcNAc...) asparagine glycosylation occurs at Asn-33. The segment covering 33–63 has biased composition (low complexity); it reads NSSNSPSSPSPFTVASLPPTTASSSSSPAVI. Fibronectin type-III domains lie at 66–165, 173–269, and 270–376; these read SSFD…YAAV, KPQN…TDVG, and GPSA…LQPN. N-linked (GlcNAc...) asparagine glycosylation is found at Asn-176, Asn-212, Asn-278, Asn-322, and Asn-336. Residues 395 to 415 form a helical membrane-spanning segment; the sequence is VLVGIIFSCFGIILIIMAFFL. Residues 416–1301 lie on the Cytoplasmic side of the membrane; sequence WSRKCFHAAY…TDAQNLDIVG (886 aa). Tyrosine-protein phosphatase domains are found at residues 476–741 and 764–1016; these read FSRE…LVEA and LEQQ…LSFL. Cys-682 acts as the Phosphocysteine intermediate in catalysis. A compositionally biased stretch (polar residues) spans 1092-1106; the sequence is TALNETVSTPSTDTN. Disordered regions lie at residues 1092–1199 and 1257–1281; these read TALN…PTIP and VGDLLMNNADNSPTASPTITNNNHI. Over residues 1107 to 1130 the composition is skewed to low complexity; sequence PSLLPILSLLPPTVAPLSSSSSTT. The segment covering 1131–1142 has biased composition (pro residues); that stretch reads PPTPSTPTPQPP. A compositionally biased stretch (polar residues) spans 1150–1161; sequence HSPSDLSHQISS. Low complexity predominate over residues 1162-1188; it reads TVANAASPVTPATASASAGATPTTPMT. Over residues 1264–1273 the composition is skewed to polar residues; that stretch reads NADNSPTASP.

The protein belongs to the protein-tyrosine phosphatase family. Receptor class subfamily. As to expression, selectively expressed in a subset of axons and pioneer neurons (including aCC and RP2) in the embryo.

It is found in the membrane. The catalysed reaction is O-phospho-L-tyrosyl-[protein] + H2O = L-tyrosyl-[protein] + phosphate. May play a key role in signal transduction and growth control. May have a role in the establishment of the intersegmental and segmental nerves. In Drosophila melanogaster (Fruit fly), this protein is Tyrosine-protein phosphatase 99A (Ptp99A).